A 396-amino-acid chain; its full sequence is Flavohemoprotein (396 aa).

The 136-residue stretch at 1-136 folds into the Globin domain; that stretch reads MLDAQTIATV…LANVFINREA (136 aa). His-85 contributes to the heme b binding site. Residues Tyr-95 and Glu-135 each act as charge relay system in the active site. The interval 147–396 is reductase; that stretch reads GGWEGTRDFR…YECFGPHKVL (250 aa). Positions 150–255 constitute an FAD-binding FR-type domain; sequence EGTRDFRIVA…VAPAGDFFMA (106 aa). FAD is bound by residues Tyr-188 and 204-207; that span reads RQYS. Residue 268 to 273 participates in NADP(+) binding; sequence GVGQTP. Residue 389–392 participates in FAD binding; that stretch reads CFGP.

It belongs to the globin family. Two-domain flavohemoproteins subfamily. This sequence in the C-terminal section; belongs to the flavoprotein pyridine nucleotide cytochrome reductase family. Requires heme b as cofactor. It depends on FAD as a cofactor.

The catalysed reaction is 2 nitric oxide + NADPH + 2 O2 = 2 nitrate + NADP(+) + H(+). It catalyses the reaction 2 nitric oxide + NADH + 2 O2 = 2 nitrate + NAD(+) + H(+). Is involved in NO detoxification in an aerobic process, termed nitric oxide dioxygenase (NOD) reaction that utilizes O(2) and NAD(P)H to convert NO to nitrate, which protects the bacterium from various noxious nitrogen compounds. Therefore, plays a central role in the inducible response to nitrosative stress. This Shigella flexneri protein is Flavohemoprotein.